Consider the following 37-residue polypeptide: Large ribosomal subunit protein bL36c (37 aa).

Belongs to the bacterial ribosomal protein bL36 family.

The protein resides in the plastid. It localises to the chloroplast. The polypeptide is Large ribosomal subunit protein bL36c (rpl36) (Marchantia polymorpha (Common liverwort)).